We begin with the raw amino-acid sequence, 237 residues long: Uracil-DNA glycosylase (237 aa).

The active-site Proton acceptor is aspartate 77.

This sequence belongs to the uracil-DNA glycosylase (UDG) superfamily. UNG family.

It is found in the cytoplasm. The enzyme catalyses Hydrolyzes single-stranded DNA or mismatched double-stranded DNA and polynucleotides, releasing free uracil.. Functionally, excises uracil residues from the DNA which can arise as a result of misincorporation of dUMP residues by DNA polymerase or due to deamination of cytosine. The chain is Uracil-DNA glycosylase from Acinetobacter baumannii (strain SDF).